The sequence spans 458 residues: MAWASRLGLLLALLLPVVGASTPGTVVRLNKAALSYVSEIGKAPLQRALQVTVPHFLDWSGEALQPTRIRILNVHVPRLHLKFIAGFGVRLLAAANFTFKVFRAPEPLELTLPVELLADTRVTQSSIRTPVVSISACSLFSGHANEFDGSNSTSHALLVLVQKHIKAVLSNKLCLSISNLVQGVNVHLGTLIGLNPVGPESQIRYSMVSVPTVTSDYISLEVNAVLFLLGKPIILPTDATPFVLPRHVGTEGSMATVGLSQQLFDSALLLLQKAGALNLDITGQLRSDDNLLNTSALGRLIPEVARQFPEPMPVVLKVRLGATPVAMLHTNNATLRLQPFVEVLATASNSAFQSLFSLDVVVNLRLQLSVSKVKLQGTTSVLGDVQLTVASSNVGFIDTDQVRTLMGTVFEKPLLDHLNALLAMGIALPGVVNLHYVAPEIFVYEGYVVISSGLFYQS.

An N-terminal signal peptide occupies residues 1-20; that stretch reads MAWASRLGLLLALLLPVVGA. Residue Thr-52 is modified to Phosphothreonine; by FAM20C. Ser-60 carries the phosphoserine; by FAM20C modification. N-linked (GlcNAc...) asparagine glycans are attached at residues Asn-96, Asn-151, Asn-293, and Asn-332. Cys-137 and Cys-174 are disulfide-bonded.

It belongs to the BPI/LBP/Plunc superfamily. BPI/LBP family. As to expression, highly expressed in tonsils, especially in hypertrophic tonsils. Detected at very low levels in fetal liver.

The protein resides in the secreted. The polypeptide is BPI fold-containing family B member 2 (BPIFB2) (Homo sapiens (Human)).